The chain runs to 494 residues: MKKQAFSSEQYLNLQRDHILERINQFDGKLYLEFGGKMLEDFHAARVLPGYEPDNKIKLLQELKEQVEVVIAINASNIEHSKARGDLGISYDQEVLRLIDKFNELGIFVGSVVITQYAGQPAADAFRNQLEKNGIDSYLHYPIKGYPTDMDHIISPEGMGKNDYIKTSRNLIVVTAPGPGSGKLATCMSNMYHDQINVIKSGYAKFETFPVWNLPLHHPVNLAYEAATADLDDVNMIDPFHLQTYGETTVNYNRDIEIFPVLKRMLERILGKSPYASPTDMGVNMVGFAITDDEAAVEASKQEIIRRYYQTVLDFKAEKVGEAAVKKIELLMNDLGITPADRKVAVVARQKAEETGGPALAFELPNGEIVTGKNSELFGPTAAALINAIKKSADIAKEVKLIEPEVVKPIQGLKIDHLGSRNPRLHSNEILIALAITATENPDAARAMEELGNLKGSEAHSTIILTDEDKNVLRKLGINVTFDPYYQYDRLYRK.

The protein belongs to the UPF0371 family.

In Streptococcus pneumoniae (strain Taiwan19F-14), this protein is UPF0371 protein SPT_0390.